An 838-amino-acid polypeptide reads, in one-letter code: Extragenic suppressor of kinetochore protein 1 (838 aa).

Phosphoserine occurs at positions 411 and 418. The disordered stretch occupies residues 411–468 (SDEDDDDSTFSDKNSKDFKETEDMNGAEDMHGRAPQITKDNLNLTTTDSPMSEAEPVS). T419 is subject to Phosphothreonine. Positions 423–442 (KNSKDFKETEDMNGAEDMHG) are enriched in basic and acidic residues. S425, S459, S468, and S491 each carry phosphoserine. A compositionally biased stretch (polar residues) spans 448–460 (TKDNLNLTTTDSP). Position 493 is a phosphothreonine (T493). At S494 the chain carries Phosphoserine. Residues 690 to 700 (ELESNSSDDDV) show a composition bias toward acidic residues. Disordered regions lie at residues 690–745 (ELES…DQDN) and 757–838 (ISDN…NHGK). Residues S711 and S713 each carry the phosphoserine modification. A compositionally biased stretch (acidic residues) spans 714–723 (NDEDDGNDED). Residues 724 to 734 (PLSREMSRRLS) are compositionally biased toward basic and acidic residues. Composition is skewed to acidic residues over residues 768-779 (SDEDDDDDDEVV) and 806-818 (SDSEEEDGNDSSD).

This sequence belongs to the SAPS family. Interacts with ppe1 and mis12.

Its subcellular location is the nucleus. Has a role in chromosome segregation. May provide a dynamic connection between kinetochore microtubules and kinetochore chromatin. The protein is Extragenic suppressor of kinetochore protein 1 (ekc1) of Schizosaccharomyces pombe (strain 972 / ATCC 24843) (Fission yeast).